The primary structure comprises 850 residues: Penicillin-binding protein 1A (850 aa).

Residues 1–5 (MKFVK) are Cytoplasmic-facing. Residues 6–26 (YFLILAVCCILLGAGSIYGLY) traverse the membrane as a helical; Signal-anchor for type II membrane protein segment. At 27 to 850 (RYIEPQLPDV…IDNGEAQELF (824 aa)) the chain is on the periplasmic side. Residues 48-216 (MQIYSADGEL…STFNPLYSMD (169 aa)) are transglycosylase. Catalysis depends on Glu-86, which acts as the Proton donor; for transglycosylase activity. The tract at residues 400–710 (DVLQTGQQIW…GWRAGRDLQR (311 aa)) is transpeptidase. Residue Ser-465 is the Acyl-ester intermediate; for transpeptidase activity of the active site.

It in the N-terminal section; belongs to the glycosyltransferase 51 family. In the C-terminal section; belongs to the transpeptidase family.

The protein localises to the cell inner membrane. It carries out the reaction [GlcNAc-(1-&gt;4)-Mur2Ac(oyl-L-Ala-gamma-D-Glu-L-Lys-D-Ala-D-Ala)](n)-di-trans,octa-cis-undecaprenyl diphosphate + beta-D-GlcNAc-(1-&gt;4)-Mur2Ac(oyl-L-Ala-gamma-D-Glu-L-Lys-D-Ala-D-Ala)-di-trans,octa-cis-undecaprenyl diphosphate = [GlcNAc-(1-&gt;4)-Mur2Ac(oyl-L-Ala-gamma-D-Glu-L-Lys-D-Ala-D-Ala)](n+1)-di-trans,octa-cis-undecaprenyl diphosphate + di-trans,octa-cis-undecaprenyl diphosphate + H(+). The enzyme catalyses Preferential cleavage: (Ac)2-L-Lys-D-Ala-|-D-Ala. Also transpeptidation of peptidyl-alanyl moieties that are N-acyl substituents of D-alanine.. It functions in the pathway cell wall biogenesis; peptidoglycan biosynthesis. In terms of biological role, cell wall formation. Synthesis of cross-linked peptidoglycan from the lipid intermediates. The enzyme has a penicillin-insensitive transglycosylase N-terminal domain (formation of linear glycan strands) and a penicillin-sensitive transpeptidase C-terminal domain (cross-linking of the peptide subunits). The sequence is that of Penicillin-binding protein 1A (mrcA) from Escherichia coli (strain K12).